The following is a 339-amino-acid chain: Malate dehydrogenase 3, cytoplasmic (339 aa).

NAD(+) is bound by residues 22-23 (NI), Asp-49, and Gly-96. Arg-105 is an oxaloacetate binding site. 2 residues coordinate NAD(+): Gln-119 and Asn-138. 4 residues coordinate oxaloacetate: Asn-138, Arg-169, His-194, and Ser-249. The active-site Proton acceptor is His-194.

It belongs to the LDH/MDH superfamily. MDH type 2 family. As to expression, expressed in rosette leaves at low levels.

The protein resides in the cytoplasm. It carries out the reaction (S)-malate + NAD(+) = oxaloacetate + NADH + H(+). Catalyzes a reversible NAD-dependent dehydrogenase reaction involved in central metabolism and redox homeostasis between organelle compartments. The chain is Malate dehydrogenase 3, cytoplasmic from Arabidopsis thaliana (Mouse-ear cress).